Reading from the N-terminus, the 79-residue chain is Sec-independent protein translocase protein TatA (79 aa).

The chain crosses the membrane as a helical span at residues 1-21; it reads MGFSTTHLLIFLVIIIVIFGT. The interval 43–63 is disordered; that stretch reads KEGSDKAADAPAAAPQQVASS. Over residues 51-63 the composition is skewed to low complexity; sequence DAPAAAPQQVASS.

It belongs to the TatA/E family. As to quaternary structure, the Tat system comprises two distinct complexes: a TatABC complex, containing multiple copies of TatA, TatB and TatC subunits, and a separate TatA complex, containing only TatA subunits. Substrates initially bind to the TatABC complex, which probably triggers association of the separate TatA complex to form the active translocon.

It localises to the cell inner membrane. Its function is as follows. Part of the twin-arginine translocation (Tat) system that transports large folded proteins containing a characteristic twin-arginine motif in their signal peptide across membranes. TatA could form the protein-conducting channel of the Tat system. In Albidiferax ferrireducens (strain ATCC BAA-621 / DSM 15236 / T118) (Rhodoferax ferrireducens), this protein is Sec-independent protein translocase protein TatA.